The following is a 143-amino-acid chain: MAIERTFSIIKPDAVAKNHIGAIYNRFETAGLKIVAAKMLHLTKEQAEGFYAEHSERGFFGALVAFMTSGPIMVQVLEGENAVLAHREILGATNPAQAAPGTIRADFAQSIDENAAHGSDSLASAEREIAYFFSAEELCPRTR.

The ATP site is built by K11, F59, R87, T93, R104, and N114. Residue H117 is the Pros-phosphohistidine intermediate of the active site.

It belongs to the NDK family. As to quaternary structure, homotetramer. Requires Mg(2+) as cofactor.

The protein resides in the cytoplasm. The catalysed reaction is a 2'-deoxyribonucleoside 5'-diphosphate + ATP = a 2'-deoxyribonucleoside 5'-triphosphate + ADP. It catalyses the reaction a ribonucleoside 5'-diphosphate + ATP = a ribonucleoside 5'-triphosphate + ADP. Functionally, major role in the synthesis of nucleoside triphosphates other than ATP. The ATP gamma phosphate is transferred to the NDP beta phosphate via a ping-pong mechanism, using a phosphorylated active-site intermediate. In Shewanella oneidensis (strain ATCC 700550 / JCM 31522 / CIP 106686 / LMG 19005 / NCIMB 14063 / MR-1), this protein is Nucleoside diphosphate kinase.